The sequence spans 157 residues: UPF0587 protein C2D10.03c (157 aa).

4 residues coordinate Zn(2+): C34, C37, C68, and C71.

Belongs to the UPF0587 family.

The polypeptide is UPF0587 protein C2D10.03c (Schizosaccharomyces pombe (strain 972 / ATCC 24843) (Fission yeast)).